The following is a 1337-amino-acid chain: Nucleoporin POM152 (1337 aa).

The disordered stretch occupies residues 1–48 (MEHRYNVFNDTPRGNHWMGSSVSGSPRPSYSSRPNVNTTRRFQYSDDE). The Cytoplasmic segment spans residues 1 to 110 (MEHRYNVFND…TDVLEISKQR (110 aa)). Residues 1–175 (MEHRYNVFND…SFNIPRLTFK (175 aa)) form a pore side region. The span at 19–37 (GSSVSGSPRPSYSSRPNVN) shows a compositional bias: low complexity. Ser-45 and Ser-60 each carry phosphoserine. Residues 111–131 (TFAVILFLIIQCYKIYDLVIL) traverse the membrane as a helical segment. Residues 132-148 (KSGLPLSGLLFKNYRFN) lie on the Perinuclear space side of the membrane. The helical transmembrane segment at 149–169 (FISKYFIIDSFFLYVLPSFNI) threads the bilayer. Over 170–172 (PRL) the chain is Cytoplasmic. The chain crosses the membrane as a helical span at residues 173-193 (TFKPWVVYLQILAMLLLNIFI). The Perinuclear space segment spans residues 194–1337 (SSDHEFVLIS…FAKNDLFFNN (1144 aa)). The interval 196 to 1337 (DHEFVLISLI…FAKNDLFFNN (1142 aa)) is cisternal side. N-linked (GlcNAc...) asparagine glycosylation is present at Asn-280. 8 repeat units span residues 390 to 413 (DRCI…KLAY), 626 to 650 (DQCV…YYNT), 732 to 755 (KLCL…TLTY), 836 to 859 (KIKH…TVKF), 943 to 966 (EVCQ…ILEY), 1058 to 1077 (FLEP…SITF), 1157 to 1178 (EYCV…MIKY), and 1253 to 1276 (DIRE…SLTY). An 8 X 24 AA approximate repeats region spans residues 390 to 1276 (DRCIGDSDNV…EGTPPFSLTY (887 aa)).

Component of the nuclear pore complex (NPC). NPC constitutes the exclusive means of nucleocytoplasmic transport. NPCs allow the passive diffusion of ions and small molecules and the active, nuclear transport receptor-mediated bidirectional transport of macromolecules such as proteins, RNAs, ribonucleoparticles (RNPs), and ribosomal subunits across the nuclear envelope. Due to its 8-fold rotational symmetry, all subunits are present with 8 copies or multiples thereof. Interacts with NUP188. Post-translationally, the N-terminus is blocked. Phosphorylated by CDC28.

It localises to the nucleus. The protein localises to the nuclear pore complex. Its subcellular location is the nucleus membrane. Functions as a component of the nuclear pore complex (NPC). NPC components, collectively referred to as nucleoporins (NUPs), can play the role of both NPC structural components and of docking or interaction partners for transiently associated nuclear transport factors. POM152 is important for the de novo assembly of NPCs. The protein is Nucleoporin POM152 (POM152) of Saccharomyces cerevisiae (strain ATCC 204508 / S288c) (Baker's yeast).